A 155-amino-acid polypeptide reads, in one-letter code: Transcription antitermination protein NusB (155 aa).

This sequence belongs to the NusB family.

Functionally, involved in transcription antitermination. Required for transcription of ribosomal RNA (rRNA) genes. Binds specifically to the boxA antiterminator sequence of the ribosomal RNA (rrn) operons. This chain is Transcription antitermination protein NusB, found in Vibrio parahaemolyticus serotype O3:K6 (strain RIMD 2210633).